Here is a 491-residue protein sequence, read N- to C-terminus: Glutamyl-tRNA(Gln) amidotransferase subunit A (491 aa).

Residues Lys76 and Ser154 each act as charge relay system in the active site. The active-site Acyl-ester intermediate is Ser178.

This sequence belongs to the amidase family. GatA subfamily. As to quaternary structure, heterotrimer of A, B and C subunits.

The catalysed reaction is L-glutamyl-tRNA(Gln) + L-glutamine + ATP + H2O = L-glutaminyl-tRNA(Gln) + L-glutamate + ADP + phosphate + H(+). Functionally, allows the formation of correctly charged Gln-tRNA(Gln) through the transamidation of misacylated Glu-tRNA(Gln) in organisms which lack glutaminyl-tRNA synthetase. The reaction takes place in the presence of glutamine and ATP through an activated gamma-phospho-Glu-tRNA(Gln). This chain is Glutamyl-tRNA(Gln) amidotransferase subunit A, found in Cereibacter sphaeroides (strain ATCC 17023 / DSM 158 / JCM 6121 / CCUG 31486 / LMG 2827 / NBRC 12203 / NCIMB 8253 / ATH 2.4.1.) (Rhodobacter sphaeroides).